Consider the following 304-residue polypeptide: Probable 5-dehydro-4-deoxyglucarate dehydratase (304 aa).

It belongs to the DapA family.

The catalysed reaction is 5-dehydro-4-deoxy-D-glucarate + H(+) = 2,5-dioxopentanoate + CO2 + H2O. The protein operates within carbohydrate acid metabolism; D-glucarate degradation; 2,5-dioxopentanoate from D-glucarate: step 2/2. This is Probable 5-dehydro-4-deoxyglucarate dehydratase from Rhodococcus jostii (strain RHA1).